Here is a 338-residue protein sequence, read N- to C-terminus: MIHKNWAELIKPTQLEVKPGNDPARQATVIAEPLERGFGLTLGNALRRILMSSLQGAAISSVQIDNVLHEFSSVAGVREDVTDIILNLKQVSLRMDVEGPKRLSVNAKGPAVVTAGDISESAGIEVLNRDHVICHLDDGADLFMELTVNTGKGYVSADKNRPEDAPIGLIPIDAIYSPVKKVAYDVQPTREGQVLDYDKLTMKIETDGSITPDDAVAFAARILQDQLSIFVNFDEPESAGRQDDDDGLEFNPLLLKKVDELELSVRSANCLKNDNIVYIGDLIQKTEAEMLRTPNFGRKSLNEIKEVLSGMGLHLGMDVEDWPPDNIEDLAKKFEDAF.

Positions 1–234 (MIHKNWAELI…DQLSIFVNFD (234 aa)) are alpha N-terminal domain (alpha-NTD). The tract at residues 250–338 (FNPLLLKKVD…DLAKKFEDAF (89 aa)) is alpha C-terminal domain (alpha-CTD).

Belongs to the RNA polymerase alpha chain family. In terms of assembly, homodimer. The RNAP catalytic core consists of 2 alpha, 1 beta, 1 beta' and 1 omega subunit. When a sigma factor is associated with the core the holoenzyme is formed, which can initiate transcription.

The catalysed reaction is RNA(n) + a ribonucleoside 5'-triphosphate = RNA(n+1) + diphosphate. Its function is as follows. DNA-dependent RNA polymerase catalyzes the transcription of DNA into RNA using the four ribonucleoside triphosphates as substrates. In Ruegeria pomeroyi (strain ATCC 700808 / DSM 15171 / DSS-3) (Silicibacter pomeroyi), this protein is DNA-directed RNA polymerase subunit alpha.